Here is a 45-residue protein sequence, read N- to C-terminus: Natriuretic peptide OsNP-d (45 aa).

A propeptide spanning residues 1–5 (PAAGL) is cleaved from the precursor. Cysteine 14 and cysteine 30 are oxidised to a cystine.

The protein belongs to the natriuretic peptide family. As to expression, expressed by the venom gland.

It localises to the secreted. Functionally, snake venom natriuretic peptide that targets both NPR1 and NPR2. Exhibits hypotensive and vasodepressor activities. The protein is Natriuretic peptide OsNP-d of Oxyuranus scutellatus scutellatus (Australian taipan).